The following is a 63-amino-acid chain: Cecropin-1/3 (63 aa).

The signal sequence occupies residues 1–23 (MNFYKVFIFVALILAISLGQSEA). Residue Arg-62 is modified to Arginine amide.

Belongs to the cecropin family.

It is found in the secreted. In terms of biological role, cecropins have lytic and antibacterial activity against several Gram-positive and Gram-negative bacteria. This chain is Cecropin-1/3 (Cec1), found in Drosophila virilis (Fruit fly).